Consider the following 355-residue polypeptide: UDP-3-O-acylglucosamine N-acyltransferase (355 aa).

Catalysis depends on His-258, which acts as the Proton acceptor.

Belongs to the transferase hexapeptide repeat family. LpxD subfamily. As to quaternary structure, homotrimer.

The catalysed reaction is a UDP-3-O-[(3R)-3-hydroxyacyl]-alpha-D-glucosamine + a (3R)-hydroxyacyl-[ACP] = a UDP-2-N,3-O-bis[(3R)-3-hydroxyacyl]-alpha-D-glucosamine + holo-[ACP] + H(+). It participates in bacterial outer membrane biogenesis; LPS lipid A biosynthesis. In terms of biological role, catalyzes the N-acylation of UDP-3-O-acylglucosamine using 3-hydroxyacyl-ACP as the acyl donor. Is involved in the biosynthesis of lipid A, a phosphorylated glycolipid that anchors the lipopolysaccharide to the outer membrane of the cell. The chain is UDP-3-O-acylglucosamine N-acyltransferase from Agrobacterium fabrum (strain C58 / ATCC 33970) (Agrobacterium tumefaciens (strain C58)).